A 185-amino-acid chain; its full sequence is Ribosome-recycling factor (185 aa).

It belongs to the RRF family.

It localises to the cytoplasm. Its function is as follows. Responsible for the release of ribosomes from messenger RNA at the termination of protein biosynthesis. May increase the efficiency of translation by recycling ribosomes from one round of translation to another. The chain is Ribosome-recycling factor from Salmonella paratyphi A (strain ATCC 9150 / SARB42).